A 403-amino-acid chain; its full sequence is Glucose-signaling factor 2 (403 aa).

The Lumenal portion of the chain corresponds to 1 to 177; it reads MEIYIRLNAD…QEVQANYSSL (177 aa). Asn-89 and Asn-173 each carry an N-linked (GlcNAc...) asparagine glycan. The helical; Signal-anchor for type II membrane protein transmembrane segment at 178 to 198 threads the bilayer; the sequence is VAQWLFFVMHIFKVGIITLFL. Residues 199–403 are Cytoplasmic-facing; sequence KLGIANPISF…IKKNDLKKSN (205 aa). Positions 330-388 form a coiled coil; the sequence is ELENNLKKILEEYDGDIGKMNAEIRRFRRFGIYEPDEKLASLVKLRREIADEKEKASNN.

It is found in the endoplasmic reticulum membrane. In terms of biological role, may be involved in the secretion of hexose transporters from the endoplasmic reticulum. Involved in secretion of GAL2 and HXT1. This is Glucose-signaling factor 2 (GSF2) from Saccharomyces cerevisiae (strain ATCC 204508 / S288c) (Baker's yeast).